The chain runs to 279 residues: MALKQFNPTSPGQRGLVLIDRSELHKGRPEKKLVEGLTKSGGRGGNGRIAVRFRGGGAKRLYRLVDFKRRKQGVATVVRLEYDPNRTAFIALIKYQADGELAYILAPQRLKAGDEVVTAEKVDVKPGNASPLRTLPIGTIIHNIELKPAKGGQIARSAGAYAQLVGRDAGYAQIRLNSGELRMVLDTCMATVGAVSNPDHMNQNLGKAGRSRHMGRRPHVRGVAMNPVDHPHGGGEGRTSGGRHPVTPAGKPTKGAKTRVNKATDKFIIRSRHKAKKGR.

The tract at residues 222 to 279 (GVAMNPVDHPHGGGEGRTSGGRHPVTPAGKPTKGAKTRVNKATDKFIIRSRHKAKKGR) is disordered. The segment covering 269–279 (IRSRHKAKKGR) has biased composition (basic residues).

The protein belongs to the universal ribosomal protein uL2 family. In terms of assembly, part of the 50S ribosomal subunit. Forms a bridge to the 30S subunit in the 70S ribosome.

Functionally, one of the primary rRNA binding proteins. Required for association of the 30S and 50S subunits to form the 70S ribosome, for tRNA binding and peptide bond formation. It has been suggested to have peptidyltransferase activity; this is somewhat controversial. Makes several contacts with the 16S rRNA in the 70S ribosome. In Caulobacter vibrioides (strain ATCC 19089 / CIP 103742 / CB 15) (Caulobacter crescentus), this protein is Large ribosomal subunit protein uL2.